The sequence spans 358 residues: MSAFVSKYEDELIKTAKYIATPGRGILAADESTETIGKRFAGINVENTESNRQAYRELLFTSPGSYPCLSGVILFEETLYQKTSDGKPFVDLLMENGVIPGIKVDKGLVDLAGTNGETTTQGLDSLGARCQQYYEAGARFAKWRAFFKIGATEPSVLSIQEDARVLARYAIICQENGLVPIVEPEVLTGGSHDIKKCAAVTETVLAAVFKALNYHHVLLEGTLLKPNMVTPGSDSPKVAPELIAEYTVTALRRTVPPAIPGIVFLSGIQREEQATLNLNAMNKLDVLKPWTLTFSFGGALQQSAIKAWAGKPENVAKAQAKFLTRCKANKDATLGKYTGWASGDSAAFENLVVIGYRY.

Ser-2 is modified (N-acetylserine). Arg-52 is a binding site for substrate. Residue Cys-68 is modified to S-glutathionyl cysteine; transient. Substrate is bound at residue Lys-142. Cys-173 is modified (S-glutathionyl cysteine; transient; alternate). The residue at position 173 (Cys-173) is an S-nitrosocysteine; transient; alternate. The active-site Proton acceptor is Glu-183. The active-site Schiff-base intermediate with dihydroxyacetone-P is Lys-225. A substrate-binding site is contributed by 266-268 (SGI).

The protein belongs to the class I fructose-bisphosphate aldolase family. Homotetramer. Post-translationally, S-glutathionylated at Cys-68 and Cys-173. S-nitrosylated at Cys-173. Highly expressed in flowers, and at lower levels in rosettes leaves and cauline leaves.

It is found in the cytoplasm. It localises to the cytosol. The catalysed reaction is beta-D-fructose 1,6-bisphosphate = D-glyceraldehyde 3-phosphate + dihydroxyacetone phosphate. Its pathway is carbohydrate degradation; glycolysis; D-glyceraldehyde 3-phosphate and glycerone phosphate from D-glucose: step 4/4. Functionally, plays a key role in glycolysis and gluconeogenesis. This Arabidopsis thaliana (Mouse-ear cress) protein is Fructose-bisphosphate aldolase 7, cytosolic.